Consider the following 607-residue polypeptide: All-trans-retinol 13,14-reductase (607 aa).

An N-terminal signal peptide occupies residues 1 to 22 (MWFAVVAIFLALVAFLYRYVVG).

The protein belongs to the carotenoid/retinoid oxidoreductase family. CrtISO subfamily. NAD(+) serves as cofactor. Requires NADP(+) as cofactor. It depends on FAD as a cofactor.

It localises to the endoplasmic reticulum membrane. It catalyses the reaction all-trans-13,14-dihydroretinol + A = all-trans-retinol + AH2. Catalyzes the saturation of all-trans-retinol to all-trans-13,14-dihydroretinol. In addition, saturates the 7-8 double bond of all-trans-retinol to produce all-trans-7,8-dihydroretinol. Can also use vitamin A2 (all-trans-3,4-didehydroretinol) as a substrate, to produce all-trans-13,14-dihydro-3,4-didehydroretinol or all-trans-7,8-dihydro-3,4-didehydroretinol. May play a role in vitamin A metabolism. The polypeptide is All-trans-retinol 13,14-reductase (Danio rerio (Zebrafish)).